A 388-amino-acid chain; its full sequence is Fibrinogen- and Ig-binding protein (388 aa).

The N-terminal stretch at 1–41 (MSKTNPNKLYSLRKLKTGTASVAVDLTVLGTGLANTTDVKA) is a signal peptide. D repeat units follow at residues 288–293 (EKLEAE), 294–299 (AKALKE), 302–307 (AKQAEE), and 309–314 (AKLKAD). A disordered region spans residues 308–362 (LAKLKADKASGAQKPDTKPGNKEVPTRPSQTRTNTNKAPMAQTKRQLPSTGEETT). A compositionally biased stretch (basic and acidic residues) spans 322 to 332 (PDTKPGNKEVP). Over residues 334-362 (RPSQTRTNTNKAPMAQTKRQLPSTGEETT) the composition is skewed to polar residues. The short motif at 354-358 (LPSTG) is the LPXTG sorting signal element. Threonine 357 carries the pentaglycyl murein peptidoglycan amidated threonine modification. Residues 358-388 (GEETTNPFFTAAALTVIASAGVLALKRKEEN) constitute a propeptide, removed by sortase.

Its subcellular location is the secreted. The protein resides in the cell wall. Binds IgG molecules of the Ig1, Ig2 and Ig4 subclasses, and also binds fibrinogen. The polypeptide is Fibrinogen- and Ig-binding protein (mrp4) (Streptococcus pyogenes).